We begin with the raw amino-acid sequence, 280 residues long: Energy-coupling factor transporter ATP-binding protein EcfA1 (280 aa).

The ABC transporter domain occupies 7 to 241 (IEVAHLKYEY…GQRLLDLGLD (235 aa)). 41-48 (GHNGSGKS) serves as a coordination point for ATP.

This sequence belongs to the ABC transporter superfamily. Energy-coupling factor EcfA family. Forms a stable energy-coupling factor (ECF) transporter complex composed of 2 membrane-embedded substrate-binding proteins (S component), 2 ATP-binding proteins (A component) and 2 transmembrane proteins (T component).

It localises to the cell membrane. ATP-binding (A) component of a common energy-coupling factor (ECF) ABC-transporter complex. Unlike classic ABC transporters this ECF transporter provides the energy necessary to transport a number of different substrates. The sequence is that of Energy-coupling factor transporter ATP-binding protein EcfA1 from Latilactobacillus sakei subsp. sakei (strain 23K) (Lactobacillus sakei subsp. sakei).